Here is a 486-residue protein sequence, read N- to C-terminus: Solute carrier family 2, facilitated glucose transporter member 5 (486 aa).

Methionine 1 is modified (N-acetylmethionine). Residues 1–19 (MEQEGQEKKKEGRLTLVLA) are Cytoplasmic-facing. Residues 20-40 (LRTLIAAFGSSFQYAYNVSVC) form a helical membrane-spanning segment. Tyrosine 33 lines the D-fructose pocket. Over 41–69 (NSPSELMTEFYNDTYYDRTGELIDEFPLT) the chain is Extracellular. Asparagine 52 carries an N-linked (GlcNAc...) asparagine glycan. Residues 70–92 (LLWSVTVSMFPSGGFAGSLLVGP) traverse the membrane as a helical segment. The Cytoplasmic segment spans residues 93–99 (LVNKFGR). A helical transmembrane segment spans residues 100–120 (KGALLFNNIFSIVPAILMGCS). Residues 121–127 (KVARSFE) are Extracellular-facing. Residues 128 to 150 (LIIISRLLVGICAGVSSNVVPMY) traverse the membrane as a helical segment. The Cytoplasmic segment spans residues 151–162 (LGELAPKNLRGA). A helical membrane pass occupies residues 163–183 (LGVESQLFITLGILVAQIFGL). Position 168 (glutamine 168) interacts with D-fructose. At 184-192 (RSIRQQKGW) the chain is on the extracellular side. Residues 193–211 (PILLGLTGGPAAAACPPFF) traverse the membrane as a helical segment. The Cytoplasmic portion of the chain corresponds to 212–274 (PESPRYLLIG…LCAMRGLAWQ (63 aa)). Residues 275 to 294 (LISVVPLMWQQLSGVNAIYY) form a helical membrane-spanning segment. D-fructose is bound by residues glutamine 284 and 292–294 (IYY). The Extracellular segment spans residues 295–306 (YDQIYLSPLDTD). A helical transmembrane segment spans residues 307–327 (TQYYTAATGAVNVLMTVCTVF). Residues 328 to 334 (VVESWAR) are Cytoplasmic-facing. A helical transmembrane segment spans residues 335 to 355 (LLLLLGFSPLAPTCCVLTAAL). Residues 356-363 (ALQDTVSW) lie on the Extracellular side of the membrane. Residues 364–385 (MPYISIVCIIVYVIGHAIGPAI) form a helical membrane-spanning segment. A D-fructose-binding site is contributed by histidine 379. At 386-402 (RSLYTEIFLQSGRPPTW) the chain is on the cytoplasmic side. Residues 403–421 (WGQVHWLSNFTVGLVFPLI) traverse the membrane as a helical segment. Position 407–408 (407–408 (HW)) interacts with D-fructose. At 422-426 (QWAGL) the chain is on the extracellular side. A helical membrane pass occupies residues 427–447 (YSFIIFGVACLSTTVYTFLIV). The Cytoplasmic segment spans residues 448-486 (PETKGKSFIEIIRRFIRMNKVEVSPDREELKDFPPDVSE).

Belongs to the major facilitator superfamily. Sugar transporter (TC 2.A.1.1) family. Glucose transporter subfamily. In terms of tissue distribution, detected in jejunum. Detected at the intestinal brush-border membrane (at protein level). Detected in duodenum, jejunum and kidney.

The protein resides in the apical cell membrane. It localises to the cell membrane. It is found in the sarcolemma. The enzyme catalyses D-fructose(out) = D-fructose(in). Functions as a fructose transporter that has only low activity with other monosaccharides. Can mediate the uptake of deoxyglucose, but with low efficiency. Essential for fructose uptake in the small intestine. Plays a role in the regulation of salt uptake and blood pressure in response to dietary fructose. Required for the development of high blood pressure in response to high dietary fructose intake. This Oryctolagus cuniculus (Rabbit) protein is Solute carrier family 2, facilitated glucose transporter member 5.